The chain runs to 514 residues: ATP synthase subunit alpha (514 aa).

170–177 (GDRQTGKT) contributes to the ATP binding site.

This sequence belongs to the ATPase alpha/beta chains family. F-type ATPases have 2 components, CF(1) - the catalytic core - and CF(0) - the membrane proton channel. CF(1) has five subunits: alpha(3), beta(3), gamma(1), delta(1), epsilon(1). CF(0) has three main subunits: a(1), b(2) and c(9-12). The alpha and beta chains form an alternating ring which encloses part of the gamma chain. CF(1) is attached to CF(0) by a central stalk formed by the gamma and epsilon chains, while a peripheral stalk is formed by the delta and b chains.

Its subcellular location is the cell inner membrane. It catalyses the reaction ATP + H2O + 4 H(+)(in) = ADP + phosphate + 5 H(+)(out). In terms of biological role, produces ATP from ADP in the presence of a proton gradient across the membrane. The alpha chain is a regulatory subunit. The polypeptide is ATP synthase subunit alpha (Acinetobacter baumannii (strain AB307-0294)).